A 430-amino-acid polypeptide reads, in one-letter code: Inner membrane transport protein YbaT (430 aa).

Residues 1 to 14 are Cytoplasmic-facing; sequence MMNTEGNNGNKPLG. Residues 15-35 traverse the membrane as a helical segment; the sequence is LWNVVSIGIGAMVGAGIFALL. Residues 36–38 are Periplasmic-facing; it reads GQA. Residues 39–59 form a helical membrane-spanning segment; sequence ALLMEASTWVAFAFGGIVAMF. Residues 60-88 are Cytoplasmic-facing; the sequence is SGYAYARLGASYPSNGGIIDFFRRGLGNG. Residues 89–109 form a helical membrane-spanning segment; it reads VFSLALSLLYLLTLAVSIAMV. At 110–128 the chain is on the periplasmic side; the sequence is ARAFGAYAVQFLHEGSQEE. Residues 129 to 149 traverse the membrane as a helical segment; it reads HLILLYALGIIAVMTLFNSLS. Topologically, residues 150-157 are cytoplasmic; the sequence is NHAVGRLE. The helical transmembrane segment at 158–178 threads the bilayer; sequence VILVGIKMMILLLLIIAGVWS. At 179-192 the chain is on the periplasmic side; sequence LQPAHISVSAPPSS. A helical membrane pass occupies residues 193–213; the sequence is GAFFSCIGITFLAYAGFGMMA. Topologically, residues 214–228 are cytoplasmic; that stretch reads NAADKVKDPQVIMPR. Residues 229 to 249 traverse the membrane as a helical segment; it reads AFLVAIGVTTLLYISLALVLL. Residues 250–272 are Periplasmic-facing; that stretch reads SDVSALELEKYADTAVAQAASPL. A helical membrane pass occupies residues 273–293; the sequence is LGHVGYVIVVIGALLATASAI. Over 294–325 the chain is Cytoplasmic; the sequence is NANLFAVFNIMDNMGSERELPKLMNKSLWRQS. Residues 326–346 traverse the membrane as a helical segment; it reads TWGNIIVVVLIMLMTAALNLG. S347 is a topological domain (periplasmic). Residues 348 to 368 form a helical membrane-spanning segment; it reads LASVASATFLICYLAVFVVAI. Topologically, residues 369–379 are cytoplasmic; that stretch reads RLRHDIHASLP. A helical transmembrane segment spans residues 380 to 400; that stretch reads ILIVGTLVMLLVIVGFIYSLW. Residues 401–403 are Periplasmic-facing; it reads SQG. A helical transmembrane segment spans residues 404–424; that stretch reads SRALIWIIGSLLLSLIVAMVM. The Cytoplasmic portion of the chain corresponds to 425-430; that stretch reads KRNKTV.

Belongs to the amino acid-polyamine-organocation (APC) superfamily.

The protein resides in the cell inner membrane. Its function is as follows. Probable amino-acid or metabolite transport protein. This Escherichia coli (strain K12) protein is Inner membrane transport protein YbaT (ybaT).